The chain runs to 254 residues: MEKLLMTNTLWNSVDELPIHDSWKPVLKPVEDAIRKLGVFLAEEEFLPPVDDVFRAFSYPFDAVKVLIMGQDPYPTPGHAMGLSFSTQPDVRPLPRSLNNIFKELVSDVGSLGDSASEQGALDLGINAPGSVAGTQVALPADGDLRAWSNQGVALFNRVLTVHPGQAGSHKGKGWEAVTEQAIKALAERDQPLVAILWGKQAQEVQKFLGDTPCICSVHPSPLSASRGFFGSKPFSRANEILSSLGATEIDWSL.

Asp-72 acts as the Proton acceptor in catalysis. Positions 111–136 (SLGDSASEQGALDLGINAPGSVAGTQ) are insert.

It belongs to the uracil-DNA glycosylase (UDG) superfamily. UNG family.

The protein resides in the cytoplasm. It catalyses the reaction Hydrolyzes single-stranded DNA or mismatched double-stranded DNA and polynucleotides, releasing free uracil.. Its function is as follows. Excises uracil residues from the DNA which can arise as a result of misincorporation of dUMP residues by DNA polymerase or due to deamination of cytosine. The sequence is that of Uracil-DNA glycosylase (ung) from Corynebacterium glutamicum (strain ATCC 13032 / DSM 20300 / JCM 1318 / BCRC 11384 / CCUG 27702 / LMG 3730 / NBRC 12168 / NCIMB 10025 / NRRL B-2784 / 534).